Consider the following 324-residue polypeptide: Phospho-N-acetylmuramoyl-pentapeptide-transferase (324 aa).

A run of 9 helical transmembrane segments spans residues 5–25, 51–71, 77–97, 117–137, 147–167, 176–196, 203–223, 227–248, and 302–322; these read VILF…PIFI, TPTM…IVMI, ISPE…LGFL, LIGQ…YQFA, VSFD…VGGS, LDGL…ILAW, VAIF…FNAH, VFMG…AILT, and VVVT…YIEV.

Belongs to the glycosyltransferase 4 family. MraY subfamily. It depends on Mg(2+) as a cofactor.

It is found in the cell membrane. The catalysed reaction is UDP-N-acetyl-alpha-D-muramoyl-L-alanyl-gamma-D-glutamyl-meso-2,6-diaminopimeloyl-D-alanyl-D-alanine + di-trans,octa-cis-undecaprenyl phosphate = di-trans,octa-cis-undecaprenyl diphospho-N-acetyl-alpha-D-muramoyl-L-alanyl-D-glutamyl-meso-2,6-diaminopimeloyl-D-alanyl-D-alanine + UMP. The protein operates within cell wall biogenesis; peptidoglycan biosynthesis. Catalyzes the initial step of the lipid cycle reactions in the biosynthesis of the cell wall peptidoglycan: transfers peptidoglycan precursor phospho-MurNAc-pentapeptide from UDP-MurNAc-pentapeptide onto the lipid carrier undecaprenyl phosphate, yielding undecaprenyl-pyrophosphoryl-MurNAc-pentapeptide, known as lipid I. In Bacillus pumilus (strain SAFR-032), this protein is Phospho-N-acetylmuramoyl-pentapeptide-transferase.